Here is a 677-residue protein sequence, read N- to C-terminus: Platelet glycoprotein Ib alpha chain (677 aa).

The N-terminal stretch at 1–16 (MHLLLWLLLLARLCRP) is a signal peptide. Positions 17–47 (EFICEVSKVTSQVEVNCDNKGLKALPPGLPG) constitute an LRRNT domain. At 17–564 (EFICEVSKVT…NPDLCCLLPL (548 aa)) the chain is on the extracellular side. Cysteine 20 and cysteine 33 form a disulfide bridge. LRR repeat units lie at residues 72-93 (RLAQ…GMLP), 94-115 (RLET…GRAL), 117-138 (ALTT…TLDG), 141-162 (HLHE…LLAP), 165-186 (QLRK…FLEG), and 189-210 (ELDT…FFGD). Positions 221–282 (NPWSCDCEIL…HTYQGKDCPS (62 aa)) constitute an LRRCT domain. Cystine bridges form between cysteine 225–cysteine 264 and cysteine 227–cysteine 280. A sulfotyrosine mark is found at tyrosine 291 and tyrosine 294. 11 O-linked (GalNAc...) threonine glycosylation sites follow: threonine 309, threonine 319, threonine 323, threonine 324, threonine 346, threonine 354, threonine 368, threonine 372, threonine 376, threonine 377, and threonine 399. The interval 359–499 (TLGPIMPTTT…EPTTTPTSPT (141 aa)) is disordered. Low complexity-rich tracts occupy residues 362–385 (PIMP…TTPT), 393–403 (PTTLEPTTTPI), 411–421 (PTTLEPTTTPI), and 427–470 (TPST…TPTI). Residues 471 to 485 (PELPTPPTTPEPTMP) show a composition bias toward pro residues. Positions 486–499 (PTTLEPTTTPTSPT) are enriched in low complexity. The O-linked (GalNAc...) threonine glycan is linked to threonine 487. Serine 497 is a glycosylation site (O-linked (GalNAc...) serine). A glycan (O-linked (GalNAc...) threonine) is linked at threonine 500. Serine 523 is a glycosylation site (O-linked (GalNAc...) serine). Residues 565–585 (GFYILGLLWLLFASVVLILLL) form a helical membrane-spanning segment. The Cytoplasmic portion of the chain corresponds to 586–677 (TWAQHVKPQA…VGVRYSSHSL (92 aa)). 2 positions are modified to phosphoserine: serine 654 and serine 657.

In terms of assembly, two GP-Ib beta are disulfide-linked to one GP-Ib alpha. GP-IX is complexed with the GP-Ib heterodimer via a non covalent linkage. Interacts with FLNB. Interacts with FLNA (via filamin repeats 4, 9, 12, 17, 19, 21, and 23). O-glycosylated. In terms of processing, glycocalicin is the product of a proteolytic cleavage/shedding, catalyzed by ADAM17, which releases most of the extracellular domain. Binding sites for vWF and thrombin are in this part of the protein.

Its subcellular location is the membrane. Its function is as follows. GP-Ib, a surface membrane protein of platelets, participates in the formation of platelet plugs by binding to the A1 domain of vWF, which is already bound to the subendothelium. The sequence is that of Platelet glycoprotein Ib alpha chain (GP1BA) from Canis lupus familiaris (Dog).